A 377-amino-acid chain; its full sequence is D-alanine--D-alanine ligase (377 aa).

Residues 141–347 enclose the ATP-grasp domain; it reads KRILNQAGIR…YSELIDRLIQ (207 aa). 171–226 lines the ATP pocket; that stretch reads KEELGDLVFVKPAKQGSSVGIHKVDTEEEYETAMKDAFTYDYKVLVEAGIKNPREI. Positions 301, 314, and 316 each coordinate Mg(2+).

The protein belongs to the D-alanine--D-alanine ligase family. Mg(2+) serves as cofactor. Requires Mn(2+) as cofactor.

The protein resides in the cytoplasm. The enzyme catalyses 2 D-alanine + ATP = D-alanyl-D-alanine + ADP + phosphate + H(+). It participates in cell wall biogenesis; peptidoglycan biosynthesis. In terms of biological role, cell wall formation. The polypeptide is D-alanine--D-alanine ligase (Limosilactobacillus fermentum (strain NBRC 3956 / LMG 18251) (Lactobacillus fermentum)).